The following is a 184-amino-acid chain: Tumor necrosis factor receptor superfamily member 13C (184 aa).

Residues 1–78 lie on the Extracellular side of the membrane; that stretch reads MRRGPRSLRG…EAALPLPGLL (78 aa). The TNFR-Cys; truncated repeat unit spans residues 18 to 35; sequence PCVPAECFDLLVRHCVAC. 2 disulfide bridges follow: C19/C32 and C24/C35. Residues 26-31 form an essential for TNFSF13B/TALL1/BAFF/BLyS binding region; sequence DLLVRH. A disordered region spans residues 43–62; the sequence is PKPAGASSPAPRTALQPQES. The helical; Signal-anchor for type III membrane protein transmembrane segment at 79-99 threads the bilayer; that stretch reads FGAPALLGLALVLALVLVGLV. Topologically, residues 100-184 are cytoplasmic; sequence SWRRRQRRLR…TTKTAGPEQQ (85 aa). The tract at residues 107 to 184 is disordered; sequence RLRGASSAEA…TTKTAGPEQQ (78 aa). Over residues 118–128 the composition is skewed to basic and acidic residues; that stretch reads DGDKDAPEPLD. Polar residues predominate over residues 168–184; it reads LGSTELVTTKTAGPEQQ.

Highly expressed in spleen and lymph node, and in resting B-cells. Detected at lower levels in activated B-cells, resting CD4+ T-cells, in thymus and peripheral blood leukocytes.

Its subcellular location is the membrane. Its function is as follows. B-cell receptor specific for TNFSF13B/TALL1/BAFF/BLyS. Promotes the survival of mature B-cells and the B-cell response. This chain is Tumor necrosis factor receptor superfamily member 13C (TNFRSF13C), found in Homo sapiens (Human).